A 76-amino-acid chain; its full sequence is Transcription attenuation protein MtrB (76 aa).

It belongs to the MtrB family. Oligomer of 11 identical subunits arranged in doughnut-like structure.

Required for transcription attenuation control in the Trp operon. This trans-acting factor seems to recognize a 10 bases nucleotide sequence in the Trp leader transcript causing transcription termination. Binds the leader RNA only in presence of L-tryptophan. This Bacillus pumilus (Bacillus mesentericus) protein is Transcription attenuation protein MtrB (mtrB).